A 389-amino-acid chain; its full sequence is tRNA-specific 2-thiouridylase MnmA (389 aa).

Residues 34–41 (AMSGGVDS) and L60 each bind ATP. Residue C128 is the Nucleophile of the active site. C128 and C225 are joined by a disulfide. An ATP-binding site is contributed by G152. Residues 174–176 (RDQ) form an interaction with tRNA region. Residue C225 is the Cysteine persulfide intermediate of the active site.

The protein belongs to the MnmA/TRMU family.

The protein localises to the cytoplasm. It catalyses the reaction S-sulfanyl-L-cysteinyl-[protein] + uridine(34) in tRNA + AH2 + ATP = 2-thiouridine(34) in tRNA + L-cysteinyl-[protein] + A + AMP + diphosphate + H(+). Its function is as follows. Catalyzes the 2-thiolation of uridine at the wobble position (U34) of tRNA, leading to the formation of s(2)U34. This Paracoccus denitrificans (strain Pd 1222) protein is tRNA-specific 2-thiouridylase MnmA.